A 940-amino-acid chain; its full sequence is Isoleucine--tRNA ligase (940 aa).

The short motif at 58-68 is the 'HIGH' region element; that stretch reads PYANGNIHIGH. Glu-563 is an L-isoleucyl-5'-AMP binding site. The short motif at 604–608 is the 'KMSKS' region element; it reads KMSKS. An ATP-binding site is contributed by Lys-607. Zn(2+) contacts are provided by Cys-903, Cys-906, Cys-923, and Cys-926.

Belongs to the class-I aminoacyl-tRNA synthetase family. IleS type 1 subfamily. In terms of assembly, monomer. Requires Zn(2+) as cofactor.

The protein resides in the cytoplasm. It catalyses the reaction tRNA(Ile) + L-isoleucine + ATP = L-isoleucyl-tRNA(Ile) + AMP + diphosphate. In terms of biological role, catalyzes the attachment of isoleucine to tRNA(Ile). As IleRS can inadvertently accommodate and process structurally similar amino acids such as valine, to avoid such errors it has two additional distinct tRNA(Ile)-dependent editing activities. One activity is designated as 'pretransfer' editing and involves the hydrolysis of activated Val-AMP. The other activity is designated 'posttransfer' editing and involves deacylation of mischarged Val-tRNA(Ile). This chain is Isoleucine--tRNA ligase, found in Buchnera aphidicola subsp. Acyrthosiphon pisum (strain 5A).